A 125-amino-acid chain; its full sequence is Linear element protein rec27 (125 aa).

Residues 45–104 (KTNIENEKKAFIKDVSQVQQKIKEFEIQKANQIKQLNEEKLSIEARKQQLEIEIRNQLLQ) adopt a coiled-coil conformation.

In terms of assembly, component of linear elements (LinEs), which are similar to synaptonemal complexes, at least composed of rec27, rec25, rec10 and mug20.

It is found in the cytoplasm. Its subcellular location is the nucleus. The protein localises to the chromosome. Functionally, during meiotic DNA recombination, binds to and activates DNA double-strand break (DSB) hotspot sites. This is Linear element protein rec27 from Schizosaccharomyces pombe (strain 972 / ATCC 24843) (Fission yeast).